We begin with the raw amino-acid sequence, 80 residues long: U1-nemetoxin-Csp1a (80 aa).

Positions 1-20 are cleaved as a signal peptide; it reads MKYFVVFCVLIIAVAAFTSA. Positions 21 to 41 are excised as a propeptide; sequence AEDGEVFEENPLEFPKTIQKR. 4 cysteine pairs are disulfide-bonded: C42-C56, C49-C60, C55-C77, and C66-C73.

Belongs to the neurotoxin 13 (insecticidal toxin ABC) family. 02 (Calisoga) subfamily. As to expression, expressed by the venom gland.

It is found in the secreted. Causes paralysis to insect larvae (H.virescens). This toxin is active only on insects. This chain is U1-nemetoxin-Csp1a, found in Calisoga sp. (Spider).